The following is a 251-amino-acid chain: 3-deoxy-manno-octulosonate cytidylyltransferase (251 aa).

This sequence belongs to the KdsB family.

It localises to the cytoplasm. The catalysed reaction is 3-deoxy-alpha-D-manno-oct-2-ulosonate + CTP = CMP-3-deoxy-beta-D-manno-octulosonate + diphosphate. Its pathway is nucleotide-sugar biosynthesis; CMP-3-deoxy-D-manno-octulosonate biosynthesis; CMP-3-deoxy-D-manno-octulosonate from 3-deoxy-D-manno-octulosonate and CTP: step 1/1. The protein operates within bacterial outer membrane biogenesis; lipopolysaccharide biosynthesis. In terms of biological role, activates KDO (a required 8-carbon sugar) for incorporation into bacterial lipopolysaccharide in Gram-negative bacteria. The protein is 3-deoxy-manno-octulosonate cytidylyltransferase of Agrobacterium fabrum (strain C58 / ATCC 33970) (Agrobacterium tumefaciens (strain C58)).